A 130-amino-acid chain; its full sequence is Glycoprotein hormone beta-5 (130 aa).

A signal peptide spans methionine 1–serine 24. 5 cysteine pairs are disulfide-bonded: cysteine 36-cysteine 84, cysteine 50-cysteine 99, cysteine 60-cysteine 115, cysteine 64-cysteine 117, and cysteine 120-cysteine 127. A glycan (N-linked (GlcNAc...) asparagine) is linked at asparagine 87.

This sequence belongs to the glycoprotein hormones subunit beta family. As to quaternary structure, heterodimer with GPHA2; this heterodimer interacts with thyroid-stimulating hormone receptor (TSHR), and hence stimulates cAMP production. N-glycosylated. Expressed in the anterior lobe of pituitary.

It is found in the secreted. Its function is as follows. Functions as a heterodimeric glycoprotein hormone with GPHA2 able to bind and activate the thyroid-stimulating hormone receptor (TSHR), leading to increased cAMP production. Plays a central role in controlling thyroid cell metabolism. This is Glycoprotein hormone beta-5 (Gphb5) from Mus musculus (Mouse).